The primary structure comprises 86 residues: uncharacterized protein (86 aa).

4Fe-4S ferredoxin-type domains are found at residues 1 to 29 (MALL…IGDE) and 31 to 65 (YVID…PDPE). Positions 9, 12, 15, 19, 38, 41, 50, and 54 each coordinate [4Fe-4S] cluster.

[4Fe-4S] cluster is required as a cofactor.

This is an uncharacterized protein from Haemophilus influenzae (strain ATCC 51907 / DSM 11121 / KW20 / Rd).